A 319-amino-acid chain; its full sequence is Tetrahydromethanopterin S-methyltransferase subunit H (319 aa).

This sequence belongs to the MtrH family. The complex is composed of 8 subunits; MtrA, MtrB, MtrC, MtrD, MtrE, MtrF, MtrG and MtrH.

The enzyme catalyses 5-methyl-5,6,7,8-tetrahydromethanopterin + coenzyme M + 2 Na(+)(in) = 5,6,7,8-tetrahydromethanopterin + methyl-coenzyme M + 2 Na(+)(out). It participates in one-carbon metabolism; methanogenesis from CO(2); methyl-coenzyme M from 5,10-methylene-5,6,7,8-tetrahydromethanopterin: step 2/2. Part of a complex that catalyzes the formation of methyl-coenzyme M and tetrahydromethanopterin from coenzyme M and methyl-tetrahydromethanopterin. This is an energy-conserving, sodium-ion translocating step. MtrH catalyzes the transfer of the methyl group from methyl-tetrahydromethanopterin to the corrinoid prosthetic group of MtrA. The polypeptide is Tetrahydromethanopterin S-methyltransferase subunit H (Methanococcus maripaludis (strain C5 / ATCC BAA-1333)).